The chain runs to 613 residues: TANK-binding kinase 1-binding protein 1 (613 aa).

The homodimerization stretch occupies residues 1 to 280 (MESMFEDDIS…QDLASNQSEC (280 aa)). Residues 48 to 162 (YGDIKERLGG…ALVETHLRQI (115 aa)) adopt a coiled-coil conformation. The residue at position 184 (serine 184) is a Phosphoserine. Positions 218-277 (TSVSVSELERRRLEEALEAAQGEARGAQLREEQLQAECERLQGELKQLQETRAQDLASNQ) form a coiled coil. Residues 281–330 (GMAWVKRVGDDQVNLALAYTELTEELGRLRELSSLQGRILRTLLQEQARN) form an interaction with TBK1 and IKBKE region. Positions 328–457 (ARNAGQRHSP…HHAKAGFQGR (130 aa)) are disordered. Residues 346–361 (PACPSPSPPARPPPCA) are compositionally biased toward pro residues. Positions 362–372 (PCQSPAAQRRS) are enriched in low complexity. Phosphoserine is present on residues serine 365, serine 372, serine 379, serine 385, serine 400, and serine 415. Pro residues predominate over residues 389 to 406 (PSCPSPVPQRRSPVPPSC). Positions 416–433 (PVPPSCPAPQPRPPPPPG) are enriched in pro residues. Serine 502 and serine 532 each carry phosphoserine. A UBZ1-type zinc finger spans residues 581-607 (IRSCPLCQLGFPVGYPDDALIKHIDSH). The Zn(2+) site is built by cysteine 584, cysteine 587, histidine 603, and histidine 607.

Homodimer. May form a heterodimer with NAP1. Interacts with TKB1 and IKBKE. Weakly interacts with DDX3X.

Functionally, adapter protein which constitutively binds TBK1 and IKBKE playing a role in antiviral innate immunity. Essential for the efficient induction of IRF-dependent transcription following infection with Sendai virus. In Rattus norvegicus (Rat), this protein is TANK-binding kinase 1-binding protein 1.